We begin with the raw amino-acid sequence, 69 residues long: Sec-independent protein translocase protein TatA (69 aa).

A helical transmembrane segment spans residues 1–21 (MFGLGGQELILILLIILLLFG).

It belongs to the TatA/E family. In terms of assembly, forms a complex with TatC.

The protein resides in the cell inner membrane. Part of the twin-arginine translocation (Tat) system that transports large folded proteins containing a characteristic twin-arginine motif in their signal peptide across membranes. TatA could form the protein-conducting channel of the Tat system. The chain is Sec-independent protein translocase protein TatA from Chlorobium phaeovibrioides (strain DSM 265 / 1930) (Prosthecochloris vibrioformis (strain DSM 265)).